We begin with the raw amino-acid sequence, 188 residues long: Large ribosomal subunit protein bL35m (188 aa).

This sequence belongs to the bacterial ribosomal protein bL35 family.

The protein localises to the mitochondrion. This Pongo abelii (Sumatran orangutan) protein is Large ribosomal subunit protein bL35m (MRPL35).